A 307-amino-acid chain; its full sequence is Glycine--tRNA ligase alpha subunit (307 aa).

The protein belongs to the class-II aminoacyl-tRNA synthetase family. Tetramer of two alpha and two beta subunits.

It localises to the cytoplasm. The enzyme catalyses tRNA(Gly) + glycine + ATP = glycyl-tRNA(Gly) + AMP + diphosphate. The polypeptide is Glycine--tRNA ligase alpha subunit (Xylella fastidiosa (strain M23)).